Here is a 582-residue protein sequence, read N- to C-terminus: Aspartate--tRNA ligase (582 aa).

Residue Glu174 coordinates L-aspartate. The interval Gln198–Lys201 is aspartate. L-aspartate is bound at residue Arg220. ATP contacts are provided by residues Arg220–Glu222 and Gln229. Residue His443 coordinates L-aspartate. Glu477 serves as a coordination point for ATP. Residue Arg484 coordinates L-aspartate. Position 529-532 (Gly529–Arg532) interacts with ATP.

The protein belongs to the class-II aminoacyl-tRNA synthetase family. Type 1 subfamily. In terms of assembly, homodimer.

The protein resides in the cytoplasm. It carries out the reaction tRNA(Asp) + L-aspartate + ATP = L-aspartyl-tRNA(Asp) + AMP + diphosphate. Catalyzes the attachment of L-aspartate to tRNA(Asp) in a two-step reaction: L-aspartate is first activated by ATP to form Asp-AMP and then transferred to the acceptor end of tRNA(Asp). This chain is Aspartate--tRNA ligase, found in Streptococcus pyogenes serotype M3 (strain ATCC BAA-595 / MGAS315).